A 740-amino-acid chain; its full sequence is ATP-dependent DNA helicase Hel308 (740 aa).

Residues Gln28 and 46-53 (IPTASGKT) contribute to the ATP site. In terms of domain architecture, Helicase ATP-binding spans 33–204 (RQGLLDGKNL…WMDAALVQSE (172 aa)). The short motif at 149–152 (DEVH) is the DEAH box element. The 201-residue stretch at 236-436 (EVNSLVADTL…EPAMRAHALS (201 aa)) folds into the Helicase C-terminal domain. The segment at 716 to 740 (VDHTPPETEEQPQVSGQSTLFSFDG) is disordered. Residues 726-740 (QPQVSGQSTLFSFDG) are compositionally biased toward polar residues.

Belongs to the helicase family. Hel308 subfamily. Monomer.

It carries out the reaction Couples ATP hydrolysis with the unwinding of duplex DNA by translocating in the 3'-5' direction.. The catalysed reaction is ATP + H2O = ADP + phosphate + H(+). Functionally, DNA-dependent ATPase and 3'-5' DNA helicase that may be involved in repair of stalled replication forks. This Methanocella arvoryzae (strain DSM 22066 / NBRC 105507 / MRE50) protein is ATP-dependent DNA helicase Hel308.